We begin with the raw amino-acid sequence, 226 residues long: MGKISIAIDGPASSGKSTVAKILAKQLNYVYCDTGAMYRAITYLALQNQIDIQAEEPLVALCVNHTISFQQAENGQRVFIDGHEVTEAIRQPDVTNAVSAVSKHAKVREEMVALQQKIGQAGGVVMDGRDIGTAVLPKAEVKIFLVASVEERAERRFKENQEKGIETDFETLKAEIERRDYLDSTREVSPLVQASDAVKIDTTGLTIEEVVAAIQNVIKQKGFELF.

10–18 contacts ATP; it reads GPASSGKST.

Belongs to the cytidylate kinase family. Type 1 subfamily.

It is found in the cytoplasm. It catalyses the reaction CMP + ATP = CDP + ADP. The catalysed reaction is dCMP + ATP = dCDP + ADP. This is Cytidylate kinase from Enterococcus faecalis (strain ATCC 700802 / V583).